The chain runs to 1307 residues: Rab3 GTPase-activating protein regulatory subunit (1307 aa).

It belongs to the Rab3-GAP regulatory subunit family. In terms of assembly, the Rab3 GTPase-activating complex is a heterodimer composed of rbg-1 and rbg-2.

The protein localises to the cytoplasm. In terms of biological role, probable regulatory subunit of a GTPase activating protein that has specificity for Rab3 subfamily. Rab3 proteins are involved in regulated exocytosis of neurotransmitters and hormones. Rab3 GTPase-activating complex specifically converts active Rab3-GTP to the inactive form Rab3-GDP. In Caenorhabditis elegans, this protein is Rab3 GTPase-activating protein regulatory subunit (rbg-2).